A 207-amino-acid polypeptide reads, in one-letter code: MLGRPKLVLASGSPRRLALLNQAGIEPDALRPADVDETPTKGELPRSCANRLARAKAEAALQSIQLDDDLRGAYLLAADTVVAVGRRILPKAELVDEASQCLRLLSGRNHRVYTAVCLVTPKGSFRQRLIETKVRFKRLSEEDIDGYVGSGEWRGKAGGYAVQGIAGSFVVKIVGSYTNIVGLPLYETVSLLGGEGFPIRFGWLNAS.

The Proton acceptor role is filled by D79.

Belongs to the Maf family. YhdE subfamily. Requires a divalent metal cation as cofactor.

The protein resides in the cytoplasm. The catalysed reaction is dTTP + H2O = dTMP + diphosphate + H(+). It carries out the reaction UTP + H2O = UMP + diphosphate + H(+). In terms of biological role, nucleoside triphosphate pyrophosphatase that hydrolyzes dTTP and UTP. May have a dual role in cell division arrest and in preventing the incorporation of modified nucleotides into cellular nucleic acids. This is dTTP/UTP pyrophosphatase from Rhodopseudomonas palustris (strain BisB5).